The primary structure comprises 507 residues: Phosphoprotein (507 aa).

Residues 1–48 (MAEEQARHVKNGLECIRALKAEPIGSLAIGEAMAAWSEISDNPGQERA) are interaction with N0. 5 disordered regions span residues 42–91 (NPGQ…DDTE), 133–163 (SGLDGDSTLSEGDNESENSDVDIGEPDTEGY), 201–227 (NNFPKLGKTLNVPPPPDPGRASTSETP), 252–273 (TQCARKSPSEPSGPGAPAGNVP), and 285–307 (WTPESGTTISPRSQNNKEGGDHY). A phosphoserine mark is found at Ser-86 and Ser-151. Positions 144 to 160 (GDNESENSDVDIGEPDT) are enriched in acidic residues. Positions 260-270 (SEPSGPGAPAG) are enriched in low complexity. Positions 286–301 (TPESGTTISPRSQNNK) are enriched in polar residues. Residues 304–376 (GDHYDDELFS…LSSIMIAIPG (73 aa)) are multimerization. 2 interaction with the L polymerase regions span residues 361–377 (STLEGHLSSIMIAIPGL) and 396–410 (PIIGRDSGRALAEVL). Residues 457–507 (GPVSRSVIRSIIKSSRIEEDRKRYLMTLLDDIKGANDLSKFHQMLMKIIMK) form a x domain (XD) region. The interval 459–507 (VSRSVIRSIIKSSRIEEDRKRYLMTLLDDIKGANDLSKFHQMLMKIIMK) is interaction with the nucleocapsid (N-RNA).

This sequence belongs to the morbillivirus P protein family. As to quaternary structure, homotetramer. Interacts (via multimerization domain and XD domain) with polymerase L; this interaction forms the polymerase L-P complex. Interacts (via N-terminus) with N0 (via Ncore); this interaction allows P to chaperon N0 to avoid N polymerization and non-specific RNA binding before encapsidation. Interacts (via C-terminus) with N-RNA template (via Ntail); this interaction maintains the P/L complex anchored to the nucleocapsid template during the sequential transcription. Interacts (via C-terminus) with protein C this interaction allows C to associate with the ribonucleocapsid. Phosphorylation on serines by host CK2 is necessary for the formation of viral factories.

In terms of biological role, essential cofactor of the RNA polymerase L that plays a central role in the transcription and replication by forming the polymerase complex with RNA polymerase L and recruiting L to the genomic N-RNA template for RNA synthesis. Also plays a central role in the encapsidation of nascent RNA chains by forming the encapsidation complex with the nucleocapsid protein N (N-P complex). Acts as a chaperone for newly synthesized free N protein, so-called N0, allowing encapsidation of nascent RNA chains during replication. The nucleoprotein protein N prevents excessive phosphorylation of P, which leads to down-regulation of viral transcription/ replication. Participates, together with N, in the formation of viral factories (viroplasms), which are large inclusions in the host cytoplasm where replication takes place. This Homo sapiens (Human) protein is Phosphoprotein (P/V).